Here is a 706-residue protein sequence, read N- to C-terminus: MPARKIFVTTALPYANGNFHIGHIMEYIQADIWVRFQRMQGAEVNFVGADDTHGAPIMIAAEKAGKTPQQFVADIAAGRKPYLEGFHIRFDNWHSTDAPENHELARQIYRDLQAAGLIETRTIEQFFDPEKNMFLPDRFIKGECPRCHARDQYGDNCENCGAVYAPTDLIEPYSALSGAKPVLKSSDHFFFQLSDPRCVAFLQEWTQDGRLQPEVANKVKEWFSVRTNPDGTTSEGLGDWDISRDAPYFGIEIPDAPGKYFYVWLDAPVGYLASLKNLLEKRGQSYDDYVADPQLEQVHFIGKDIVTFHTLFWPAMLKFSGRKTPDAVFVHGFLTVNNGEKMSKSRGTGLDPLKYLGLGMNAEWLRYYLAAKLNGRNEDIDFNAEDFMARVNSDLIGKFVNIASRAAGFLTKRFGGRLGAPDADGAALLEALRAQAGAIAEAYERRDTARAVRETMLLADRVNEYVDARKPWELAKQEGQEAALQAACTTCIEAFRLLTLYLKPVLPALAAQVEAFLNVQPLTFADAPALLGEGHAIGAYQHLMQRVDIKQLEALFEVPAAAAAPAAPAANAAAEASAAAGAATEAPGGEHIAPTITIDDFAKIDLRIALIVNCEPVEGSTKLLRLTLDVGEGRHRNVFSGIASAYRPEELVGKLTVMVANLAPRKMKFGVSEGMVLAASHGDEKAHPGIHVLNPWPGATPGMRVR.

The short motif at 13–23 is the 'HIGH' region element; it reads PYANGNFHIGH. Zn(2+) is bound by residues Cys-144, Cys-147, Cys-157, and Cys-160. The 'KMSKS' region motif lies at 341 to 345; it reads KMSKS. Lys-344 is a binding site for ATP. The 107-residue stretch at 600–706 folds into the tRNA-binding domain; the sequence is DFAKIDLRIA…PGATPGMRVR (107 aa).

Belongs to the class-I aminoacyl-tRNA synthetase family. MetG type 1 subfamily. Homodimer. The cofactor is Zn(2+).

It localises to the cytoplasm. It catalyses the reaction tRNA(Met) + L-methionine + ATP = L-methionyl-tRNA(Met) + AMP + diphosphate. In terms of biological role, is required not only for elongation of protein synthesis but also for the initiation of all mRNA translation through initiator tRNA(fMet) aminoacylation. This Paracidovorax citrulli (strain AAC00-1) (Acidovorax citrulli) protein is Methionine--tRNA ligase.